The following is a 576-amino-acid chain: FtsZ-localized protein C (576 aa).

In terms of assembly, interacts with FtsZ filaments.

Its subcellular location is the cytoplasm. The protein resides in the cell inner membrane. Its function is as follows. Membrane anchor for FtsZ. Binds and recruits FtsZ polymers to membranes early in the cell cycle. May also improve the efficiency of cytokinesis through the regulation of cell wall hydrolysis. The polypeptide is FtsZ-localized protein C (Caulobacter vibrioides (strain NA1000 / CB15N) (Caulobacter crescentus)).